Here is a 118-residue protein sequence, read N- to C-terminus: V-type proton ATPase subunit F (118 aa).

This sequence belongs to the V-ATPase F subunit family. As to quaternary structure, V-ATPase is a heteromultimeric enzyme composed of a peripheral catalytic V1 complex (components A to H) attached to an integral membrane V0 proton pore complex (components: a, c, c', c'', d, e, f and VOA1).

Its subcellular location is the vacuole membrane. Subunit of the V1 complex of vacuolar(H+)-ATPase (V-ATPase), a multisubunit enzyme composed of a peripheral complex (V1) that hydrolyzes ATP and a membrane integral complex (V0) that translocates protons. V-ATPase is responsible for acidifying and maintaining the pH of intracellular compartments. The protein is V-type proton ATPase subunit F of Saccharomyces cerevisiae (strain ATCC 204508 / S288c) (Baker's yeast).